We begin with the raw amino-acid sequence, 342 residues long: Phosphate acyltransferase (342 aa).

The protein belongs to the PlsX family. In terms of assembly, homodimer. Probably interacts with PlsY.

The protein resides in the cytoplasm. The catalysed reaction is a fatty acyl-[ACP] + phosphate = an acyl phosphate + holo-[ACP]. Its pathway is lipid metabolism; phospholipid metabolism. Its function is as follows. Catalyzes the reversible formation of acyl-phosphate (acyl-PO(4)) from acyl-[acyl-carrier-protein] (acyl-ACP). This enzyme utilizes acyl-ACP as fatty acyl donor, but not acyl-CoA. This is Phosphate acyltransferase from Alkalilimnicola ehrlichii (strain ATCC BAA-1101 / DSM 17681 / MLHE-1).